The primary structure comprises 124 residues: Predicted GPI-anchored protein 11 (124 aa).

The first 18 residues, 1 to 18 (MKFQFVTALALASTMAVA), serve as a signal peptide directing secretion. Positions 38 to 59 (REGGSTGAELQDNNQPTAGLFG) are disordered. Serine 107 carries GPI-anchor amidated serine lipidation. A propeptide spans 108–124 (GAAGGVGNLFSGILGGL) (removed in mature form).

The protein localises to the cell membrane. This chain is Predicted GPI-anchored protein 11 (PGA11), found in Candida albicans (strain SC5314 / ATCC MYA-2876) (Yeast).